We begin with the raw amino-acid sequence, 239 residues long: Calcium load-activated calcium channel (239 aa).

The Lumenal segment spans residues 1–55 (MPRKRKCDLRAVRVGLLLGGGGVYGSRFRFTFPGCRALSPWRVRVQRRRCEMSTM). A helical membrane pass occupies residues 56-83 (FADTLLIVFISVCTALLAEGITWVLVYR). The stretch at 83 to 140 (RTDKYKRLKAEVEKQSKKLEKKKETITESAGRQQKKKIERQEEKLKNNNRDLSMVRMK) forms a coiled coil. The Cytoplasmic segment spans residues 84–137 (TDKYKRLKAEVEKQSKKLEKKKETITESAGRQQKKKIERQEEKLKNNNRDLSMV). Ser111 bears the Phosphoserine mark. The chain crosses the membrane as a helical span at residues 138–157 (RMKSMFAIGFCFTALMGMFN). Topologically, residues 158-171 (SIFDGRVVAKLPFT) are lumenal. The stretch at 172-181 (PLSYIQGLSH) is an intramembrane region. Residues 182–191 (RNLLGDDTTD) lie on the Lumenal side of the membrane. A helical transmembrane segment spans residues 192–213 (CSFIFLYILCTMSIRQNIQKIL). Residues 214 to 239 (GLAPSRAATKQAGGFLGPPPPSGKFS) lie on the Cytoplasmic side of the membrane. Ser239 bears the Phosphoserine mark.

It belongs to the TMCO1 family. As to quaternary structure, homodimer and homotetramer. Homodimer under resting conditions; forms homotetramers following ER calcium overload. Component of the GET- and EMC-like (GEL) complex, composed of RAB5IF/OPTI and TMCO1. The GEL complex is part of the multi-pass translocon (MPT) complex, composed of three subcomplexes, the GEL complex (composed of RAB5IF/OPTI and TMCO1), the BOS complex (composed of NCLN/Nicalin, NOMO and TMEM147) and the PAT complex (composed of WDR83OS/Asterix and CCDC47). The MPT complex associates with the SEC61 complex. In terms of tissue distribution, widely expressed in adult and fetal tissues, with higher levels in thymus, prostate, testis and small intestine and lower levels in brain, placenta, lung and kidney. Present in most tissues in the eye, including the trabecular meshwork and retina (at protein level).

The protein localises to the endoplasmic reticulum membrane. Its subcellular location is the golgi apparatus membrane. It localises to the mitochondrion membrane. It carries out the reaction Ca(2+)(in) = Ca(2+)(out). In terms of biological role, endoplasmic reticulum (ER) calcium-selective channel preventing intracellular Ca2(+) stores from overfilling and maintaining calcium homeostasis in the ER. In response to endoplasmic reticulum (ER) Ca2(+) overloading, assembles into a homotetramer, forming a functional calcium-selective channel facilitating Ca2(+) release. Mediates ER Ca2(+) homeostasis in osteoblasts and plays a key role in bone formation, via the CaMKII-HDAC4-RUNX2 signaling axis. Component of the multi-pass translocon (MPT) complex that mediates insertion of multi-pass membrane proteins into the lipid bilayer of membranes. The MPT complex takes over after the SEC61 complex: following membrane insertion of the first few transmembrane segments of proteins by the SEC61 complex, the MPT complex occludes the lateral gate of the SEC61 complex to promote insertion of subsequent transmembrane regions. Within the MPT complex, the GEL subcomplex may mediate insertion of transmembrane regions into the membrane. This chain is Calcium load-activated calcium channel, found in Homo sapiens (Human).